Consider the following 192-residue polypeptide: MYVVFEGIDCVGKSTQISLLKEIYKDAIFTLEPGGTELGKHLREILLNKTHPINKRAELLLFLADRAQHFEEILKINQNKLIISDRSFISGMAYAKDFENDLLFALNSFALENFFPQKIIFLKGDANLIQERLSQKELDSIEKRGIEYFLSVQDKLEKVLHFLKEKISIEILTLDAKESKEKLHQQIKEFLQ.

Residue 7–14 (GIDCVGKS) coordinates ATP.

Belongs to the thymidylate kinase family.

The catalysed reaction is dTMP + ATP = dTDP + ADP. In terms of biological role, phosphorylation of dTMP to form dTDP in both de novo and salvage pathways of dTTP synthesis. The polypeptide is Thymidylate kinase (Campylobacter jejuni subsp. jejuni serotype O:23/36 (strain 81-176)).